A 495-amino-acid polypeptide reads, in one-letter code: UDP-N-acetylmuramoyl-L-alanyl-D-glutamate--2,6-diaminopimelate ligase (495 aa).

Residues Leu-27, Ser-29, and His-44–Ala-46 contribute to the UDP-N-acetyl-alpha-D-muramoyl-L-alanyl-D-glutamate site. Position 116–122 (Gly-116–Thr-122) interacts with ATP. UDP-N-acetyl-alpha-D-muramoyl-L-alanyl-D-glutamate is bound by residues Asn-157, Thr-158–Thr-159, Ser-185, Gln-191, and Arg-193. Lys-225 bears the N6-carboxylysine mark. Meso-2,6-diaminopimelate-binding positions include Arg-390, Asp-414–Arg-417, Gly-465, and Glu-469. A Meso-diaminopimelate recognition motif motif is present at residues Asp-414 to Arg-417.

This sequence belongs to the MurCDEF family. MurE subfamily. Requires Mg(2+) as cofactor. In terms of processing, carboxylation is probably crucial for Mg(2+) binding and, consequently, for the gamma-phosphate positioning of ATP.

The protein localises to the cytoplasm. It catalyses the reaction UDP-N-acetyl-alpha-D-muramoyl-L-alanyl-D-glutamate + meso-2,6-diaminopimelate + ATP = UDP-N-acetyl-alpha-D-muramoyl-L-alanyl-gamma-D-glutamyl-meso-2,6-diaminopimelate + ADP + phosphate + H(+). It participates in cell wall biogenesis; peptidoglycan biosynthesis. Its activity is regulated as follows. Activated by potassium phosphate. Functionally, catalyzes the addition of meso-diaminopimelic acid to the nucleotide precursor UDP-N-acetylmuramoyl-L-alanyl-D-glutamate (UMAG) in the biosynthesis of bacterial cell-wall peptidoglycan. Is also able to use many meso-diaminopimelate analogs as substrates, although much less efficiently, but not L-lysine. The protein is UDP-N-acetylmuramoyl-L-alanyl-D-glutamate--2,6-diaminopimelate ligase (murE) of Escherichia coli (strain K12).